The following is an 826-amino-acid chain: MDESALTLGTIDVSYLPNSSEYSIGRCKHASEEWGECGFRPPVFRSATLKWKESLMSRKRPFVGRCCYSCTPQSWDRFFNPSIPSLGLRNVIYINETHTRHRGWLARRLSYVLFIQERDVHKGMFATNVTENVLNSSRVQEAIAEVAAELNPDGSAQQQSKAVNKVKKKAKKILQEMVATVSPAMIRLTGWVLLKLFNSFFWNIQIHKGQLEMVKAATEMNLPLIFLPVHRSHIDYLLLTFILFCHNIKAPYIASGNNLNIPIFSTLIHKLGGFFIRRRLDETPDGQKDILYRALLHGHIVELLRQQQFLEIFLEGTRSRSGKTSCARAGLLSVVVDTLSTNTIPDILIIPVGISYDRIIEGHYNGEQLGKPKKNESLWSVARGVIRMLRKNYGCVRVDFAQPFSLKEYLESQSQKPVSAPLSLEQALLPAILPSRPSDAVDEGTDMSINESRNAADESFRRRLIANLAEHILFTASKSCAIMSTHIVACLLLYRHRQGIDLSTLVEDFFVMKEEVLARDFDLGFSGNSEDVVMHAIQLLGNCITITHTSRNDEFFITPSTTVPSVFELNFYSNGVLHVFIMEAIIACSLYAVLKKRGSGGPASPSLISQEQLVRKAASLCYLLSNEGTISLPCQTFYQICHETVGRFIQYGILTVAEQDDQEDISPSLAEQHWDKKLPEPLSWRSDEEDEDSDFGEEQRDCYLKVSQSKEHQQFITFLQRLLGPLLEAYSSAAIFIHNFSGPVPEPEYLQKLHKYLINRTERRVAVYAESATYCLVKNAVKMFKDIGVFKETKQKKVSVLELSSTFLPQCNRQKLLEYILSFVVL.

Residues 1–87 (MDESALTLGT…FFNPSIPSLG (87 aa)) lie on the Cytoplasmic side of the membrane. The segment at 80 to 120 (NPSIPSLGLRNVIYINETHTRHRGWLARRLSYVLFIQERDV) is important for mitochondrial localization. An intramembrane segment occupies 88-118 (LRNVIYINETHTRHRGWLARRLSYVLFIQER). Over 119-826 (DVHKGMFATN…LEYILSFVVL (708 aa)) the chain is Cytoplasmic. Positions 230–235 (HRSHID) match the HXXXXD motif motif. 5 residues coordinate CoA: Arg278, Arg279, Lys288, Arg293, and Arg328. Ser380 carries the phosphoserine modification. Arg462 contributes to the CoA binding site. Phosphoserine is present on residues Ser686 and Ser693. 2 positions are modified to N6-acetyllysine: Lys778 and Lys782.

Belongs to the GPAT/DAPAT family.

It is found in the mitochondrion outer membrane. The enzyme catalyses sn-glycerol 3-phosphate + an acyl-CoA = a 1-acyl-sn-glycero-3-phosphate + CoA. It carries out the reaction (9Z,12Z)-octadecadienoyl-CoA + sn-glycerol 3-phosphate = 1-(9Z,12Z)-octadecadienoyl-sn-glycero-3-phosphate + CoA. It catalyses the reaction sn-glycerol 3-phosphate + (9Z)-octadecenoyl-CoA = 1-(9Z-octadecenoyl)-sn-glycero-3-phosphate + CoA. The catalysed reaction is sn-glycerol 3-phosphate + octadecanoyl-CoA = 1-octadecanoyl-sn-glycero-3-phosphate + CoA. The enzyme catalyses sn-glycerol 3-phosphate + hexadecanoyl-CoA = 1-hexadecanoyl-sn-glycero-3-phosphate + CoA. It carries out the reaction dodecanoyl-CoA + sn-glycerol 3-phosphate = 1-dodecanoyl-sn-glycerol 3-phosphate + CoA. It catalyses the reaction 1-acyl-sn-glycero-3-phospho-(1'-sn-glycerol) + an acyl-CoA = a 1,2-diacyl-sn-glycero-3-phospho-(1'-sn-glycerol) + CoA. It functions in the pathway phospholipid metabolism; CDP-diacylglycerol biosynthesis; CDP-diacylglycerol from sn-glycerol 3-phosphate: step 1/3. Mitochondrial membrane protein that catalyzes the essential first step of biosynthesis of glycerolipids such as triglycerides, phosphatidic acids and lysophosphatidic acids. Esterifies acyl-group from acyl-coenzyme A (acyl-CoA) to the sn-1 position of glycerol-3-phosphate, to produce lysophosphatidic acid. Has a narrow hydrophobic binding cleft that selects for a linear acyl chain. Catalytic activity is higher for substrates with a 16-carbon acyl chain. This chain is Glycerol-3-phosphate acyltransferase 1, mitochondrial, found in Sus scrofa (Pig).